The following is a 512-amino-acid chain: Glutathione-binding protein GsiB (512 aa).

An N-terminal signal peptide occupies residues 1 to 26 (MARAVHRSGLVALGIVTALMASCAFA).

It belongs to the bacterial solute-binding protein 5 family. The complex is composed of two ATP-binding proteins (GsiA), two transmembrane proteins (GsiC and GsiD) and a solute-binding protein (GsiB).

It localises to the periplasm. Functionally, part of the ABC transporter complex GsiABCD involved in glutathione import. Binds glutathione. In Shigella dysenteriae serotype 1 (strain Sd197), this protein is Glutathione-binding protein GsiB.